Reading from the N-terminus, the 230-residue chain is Ribose-5-phosphate isomerase A (230 aa).

Substrate-binding positions include Thr-29 to Thr-32, Asp-85 to Asp-88, and Lys-98 to Gly-101. Glu-107 acts as the Proton acceptor in catalysis. Substrate is bound at residue Lys-125.

This sequence belongs to the ribose 5-phosphate isomerase family. Homodimer.

The catalysed reaction is aldehydo-D-ribose 5-phosphate = D-ribulose 5-phosphate. Its pathway is carbohydrate degradation; pentose phosphate pathway; D-ribose 5-phosphate from D-ribulose 5-phosphate (non-oxidative stage): step 1/1. Catalyzes the reversible conversion of ribose-5-phosphate to ribulose 5-phosphate. The chain is Ribose-5-phosphate isomerase A from Staphylococcus haemolyticus (strain JCSC1435).